Reading from the N-terminus, the 397-residue chain is MFRDRTNLFLSYRRTFPHNITFSSGKAPLGDDQDIEMGTYPMMNMSHDISARLTDERKNKHENHSDALPPIFIDIAQDVDDYLLEVRRLSEQLAKVYRKNSLPGFEDKSHDEALIEDLSFKVIQMLQKCYAVMKRLKTIYNSQFVDGKQLSREELIILDNLQKIYAEKIQTESNKFRVLQNNYLKFLNKDDLKPIRNKASAENTLLLDDEEEEAAREKREGLDIEDYSKRTLQRQQQLHDTSAEAYLRERDEEITQLARGVLEVSTIFREMQDLVVDQGTIVDRIDYNLENTVVELKSADKELNKATHYQKRTQKCKVILLLTLCVIALFFFVMLKPHGGGSGGRNNGSNKYNNDDNKTVNNSHDDGSNTHINDEESNLPSIVEVTESENDALDDLL.

Topologically, residues 1–317 (MFRDRTNLFL…HYQKRTQKCK (317 aa)) are cytoplasmic. Residues 74–96 (DIAQDVDDYLLEVRRLSEQLAKV) are a coiled coil. Phosphoserine is present on Ser-109. The t-SNARE coiled-coil homology domain occupies 244–306 (EAYLRERDEE…KSADKELNKA (63 aa)). A helical; Anchor for type IV membrane protein transmembrane segment spans residues 318-338 (VILLLTLCVIALFFFVMLKPH). Residues 339–397 (GGGSGGRNNGSNKYNNDDNKTVNNSHDDGSNTHINDEESNLPSIVEVTESENDALDDLL) lie on the Vesicular side of the membrane. The disordered stretch occupies residues 341 to 397 (GSGGRNNGSNKYNNDDNKTVNNSHDDGSNTHINDEESNLPSIVEVTESENDALDDLL). Residues 353–374 (NNDDNKTVNNSHDDGSNTHIND) are compositionally biased toward basic and acidic residues. A compositionally biased stretch (acidic residues) spans 386–397 (TESENDALDDLL).

This sequence belongs to the syntaxin family. In terms of assembly, interacts with VPS45.

The protein resides in the golgi apparatus. It is found in the trans-Golgi network membrane. The protein localises to the endosome membrane. In terms of biological role, t-SNARE that functions in transport from the endosome to the late Golgi and on the endocytic pathway. This Saccharomyces cerevisiae (strain ATCC 204508 / S288c) (Baker's yeast) protein is t-SNARE affecting a late Golgi compartment protein 2 (TLG2).